Here is a 479-residue protein sequence, read N- to C-terminus: Ribosomal protein uS12 methylthiotransferase RimO (479 aa).

The disordered stretch occupies residues 1–34 (MTVNTFDPSKASPVTHASDSASKTPEPNAVAAPS). Polar residues predominate over residues 15–25 (THASDSASKTP). Positions 39–151 (NRVGFVSLGC…VMGAVHGYIP (113 aa)) constitute an MTTase N-terminal domain. [4Fe-4S] cluster is bound by residues Cys48, Cys84, Cys113, Cys184, Cys188, and Cys191. Residues 170–407 (LTPRHYAYLK…METQQAISAA (238 aa)) form the Radical SAM core domain. A TRAM domain is found at 410–476 (KQKVGYEMDV…DYDLTGIAVE (67 aa)).

Belongs to the methylthiotransferase family. RimO subfamily. [4Fe-4S] cluster serves as cofactor.

Its subcellular location is the cytoplasm. It catalyses the reaction L-aspartate(89)-[ribosomal protein uS12]-hydrogen + (sulfur carrier)-SH + AH2 + 2 S-adenosyl-L-methionine = 3-methylsulfanyl-L-aspartate(89)-[ribosomal protein uS12]-hydrogen + (sulfur carrier)-H + 5'-deoxyadenosine + L-methionine + A + S-adenosyl-L-homocysteine + 2 H(+). In terms of biological role, catalyzes the methylthiolation of an aspartic acid residue of ribosomal protein uS12. The protein is Ribosomal protein uS12 methylthiotransferase RimO of Saccharophagus degradans (strain 2-40 / ATCC 43961 / DSM 17024).